Reading from the N-terminus, the 331-residue chain is Aspartate carbamoyltransferase catalytic subunit (331 aa).

Carbamoyl phosphate contacts are provided by Arg-55 and Thr-56. Residue Lys-84 participates in L-aspartate binding. Carbamoyl phosphate is bound by residues Arg-105, His-133, and Gln-136. Arg-166 and Arg-229 together coordinate L-aspartate. Leu-268 and Pro-269 together coordinate carbamoyl phosphate.

This sequence belongs to the aspartate/ornithine carbamoyltransferase superfamily. ATCase family. In terms of assembly, heterododecamer (2C3:3R2) of six catalytic PyrB chains organized as two trimers (C3), and six regulatory PyrI chains organized as three dimers (R2).

It carries out the reaction carbamoyl phosphate + L-aspartate = N-carbamoyl-L-aspartate + phosphate + H(+). Its pathway is pyrimidine metabolism; UMP biosynthesis via de novo pathway; (S)-dihydroorotate from bicarbonate: step 2/3. In terms of biological role, catalyzes the condensation of carbamoyl phosphate and aspartate to form carbamoyl aspartate and inorganic phosphate, the committed step in the de novo pyrimidine nucleotide biosynthesis pathway. The chain is Aspartate carbamoyltransferase catalytic subunit from Alkaliphilus oremlandii (strain OhILAs) (Clostridium oremlandii (strain OhILAs)).